Reading from the N-terminus, the 290-residue chain is Bifunctional protein FolD (290 aa).

NADP(+) is bound by residues 166 to 168, serine 191, and isoleucine 232; that span reads GQS.

This sequence belongs to the tetrahydrofolate dehydrogenase/cyclohydrolase family. In terms of assembly, homodimer.

The catalysed reaction is (6R)-5,10-methylene-5,6,7,8-tetrahydrofolate + NADP(+) = (6R)-5,10-methenyltetrahydrofolate + NADPH. It carries out the reaction (6R)-5,10-methenyltetrahydrofolate + H2O = (6R)-10-formyltetrahydrofolate + H(+). It participates in one-carbon metabolism; tetrahydrofolate interconversion. Catalyzes the oxidation of 5,10-methylenetetrahydrofolate to 5,10-methenyltetrahydrofolate and then the hydrolysis of 5,10-methenyltetrahydrofolate to 10-formyltetrahydrofolate. The polypeptide is Bifunctional protein FolD (Halorhodospira halophila (strain DSM 244 / SL1) (Ectothiorhodospira halophila (strain DSM 244 / SL1))).